Here is a 105-residue protein sequence, read N- to C-terminus: ATP-dependent Clp protease adapter protein ClpS (105 aa).

This sequence belongs to the ClpS family. In terms of assembly, binds to the N-terminal domain of the chaperone ClpA.

In terms of biological role, involved in the modulation of the specificity of the ClpAP-mediated ATP-dependent protein degradation. This is ATP-dependent Clp protease adapter protein ClpS from Klebsiella pneumoniae (strain 342).